The chain runs to 347 residues: UPF0284 protein YN1551_0030 (347 aa).

This sequence belongs to the UPF0284 family.

This chain is UPF0284 protein YN1551_0030, found in Saccharolobus islandicus (strain Y.N.15.51 / Yellowstone #2) (Sulfolobus islandicus).